The chain runs to 101 residues: Small ribosomal subunit protein uS14 (101 aa).

Residues 51–70 (LPRDSSPSRQRNRCRQTGRP) are disordered.

Belongs to the universal ribosomal protein uS14 family. In terms of assembly, part of the 30S ribosomal subunit. Contacts proteins S3 and S10.

Its function is as follows. Binds 16S rRNA, required for the assembly of 30S particles and may also be responsible for determining the conformation of the 16S rRNA at the A site. This is Small ribosomal subunit protein uS14 from Salmonella arizonae (strain ATCC BAA-731 / CDC346-86 / RSK2980).